The sequence spans 554 residues: Oxygen-dependent choline dehydrogenase (554 aa).

Residue 4–33 (DYIIIGAGSAGNVLATRLTEDPNTTVLLLE) participates in FAD binding. Catalysis depends on His-473, which acts as the Proton acceptor.

It belongs to the GMC oxidoreductase family. FAD is required as a cofactor.

The catalysed reaction is choline + A = betaine aldehyde + AH2. It carries out the reaction betaine aldehyde + NAD(+) + H2O = glycine betaine + NADH + 2 H(+). It participates in amine and polyamine biosynthesis; betaine biosynthesis via choline pathway; betaine aldehyde from choline (cytochrome c reductase route): step 1/1. Involved in the biosynthesis of the osmoprotectant glycine betaine. Catalyzes the oxidation of choline to betaine aldehyde and betaine aldehyde to glycine betaine at the same rate. This is Oxygen-dependent choline dehydrogenase from Klebsiella pneumoniae subsp. pneumoniae (strain ATCC 700721 / MGH 78578).